The following is a 139-amino-acid chain: UPF0102 protein Caul_0175 (139 aa).

It belongs to the UPF0102 family.

The sequence is that of UPF0102 protein Caul_0175 from Caulobacter sp. (strain K31).